Here is a 275-residue protein sequence, read N- to C-terminus: NH(3)-dependent NAD(+) synthetase (275 aa).

Residue 46–53 (GISGGQDS) participates in ATP binding. Asp52 is a Mg(2+) binding site. Deamido-NAD(+) is bound at residue Arg140. ATP is bound at residue Thr160. Position 165 (Glu165) interacts with Mg(2+). Lys173 and Asp180 together coordinate deamido-NAD(+). Residues Lys189 and Thr211 each contribute to the ATP site. 260–261 (HK) is a binding site for deamido-NAD(+).

It belongs to the NAD synthetase family. As to quaternary structure, homodimer.

The enzyme catalyses deamido-NAD(+) + NH4(+) + ATP = AMP + diphosphate + NAD(+) + H(+). The protein operates within cofactor biosynthesis; NAD(+) biosynthesis; NAD(+) from deamido-NAD(+) (ammonia route): step 1/1. Catalyzes the ATP-dependent amidation of deamido-NAD to form NAD. Uses ammonia as a nitrogen source. The protein is NH(3)-dependent NAD(+) synthetase of Escherichia coli O17:K52:H18 (strain UMN026 / ExPEC).